A 621-amino-acid polypeptide reads, in one-letter code: Pre-mRNA-processing protein 45 (621 aa).

Disordered stretches follow at residues 1–73, 137–164, 220–251, 347–438, and 542–621; these read MSAT…YANG, SQRTDIKEKDRNSGFERPSHEEVMSNTE, AQRDPLEPPRHRFKKTAAGPPSPPPPVLRSPP, RARE…ELRM, and GKND…EHDS. Residues 36–51 show a composition bias toward low complexity; sequence PSTSSSSSALVSTSSP. 2 stretches are compositionally biased toward basic and acidic residues: residues 140-164 and 220-229; these read TDIKEKDRNSGFERPSHEEVMSNTE and AQRDPLEPPR. Over residues 239–248 the composition is skewed to pro residues; the sequence is PPSPPPPVLR. A compositionally biased stretch (basic and acidic residues) spans 364 to 380; the sequence is GRDDDVASRLADSDARP. Residues 403–417 are compositionally biased toward acidic residues; that stretch reads DSDESAASDEEDDEG. 2 stretches are compositionally biased toward basic and acidic residues: residues 418 to 437 and 594 to 621; these read ARERDRIREERRRERQRELR and EDAKRGIKRTSDQDADDARKKLRDEHDS.

The protein belongs to the SNW family. Associated with the spliceosome.

The protein resides in the nucleus. Its function is as follows. Involved in pre-mRNA splicing. The chain is Pre-mRNA-processing protein 45 (PRP45) from Mycosarcoma maydis (Corn smut fungus).